Reading from the N-terminus, the 399-residue chain is Centrosomal protein 43 (399 aa).

The LisH domain occupies 70-102 (DGRLVASLVAEFLQFFNLDFTLAVFHPETSTIQ). Disordered regions lie at residues 142–216 (PASV…SKSS) and 236–311 (DARD…KRGS). Phosphoserine occurs at positions 152 and 160. Residues 163-172 (GKSSANSTPS) show a composition bias toward polar residues. Residue Thr170 is modified to Phosphothreonine. Residues 175–186 (PRYKGQGKKKTI) show a composition bias toward basic residues. Low complexity predominate over residues 197–216 (SETSQSEPSVSLSESKSKSS). Phosphoserine is present on Ser202. Over residues 246 to 256 (DGDDVEGDSFF) the composition is skewed to acidic residues. Residues 259 to 275 (PIPKPEKTYGWRAEPRK) show a composition bias toward basic and acidic residues. Low complexity predominate over residues 290–302 (RSGLSSLAGAPSL). Phosphoserine is present on residues Ser301 and Ser326. A disordered region spans residues 328–354 (GLGTGEDEDYADDFNSASHRSEKSELS). Phosphotyrosine is present on Tyr337.

It belongs to the CEP43 family. As to quaternary structure, homodimer. Part of a ternary complex that contains CEP350, CEP43 and MAPRE1. Interacts directly with CEP350 and MAPRE1. Interacts with CEP19. Interacts (via N-terminus) with CEP350 (via C-terminus).

The protein localises to the cytoplasm. It is found in the cytoskeleton. It localises to the microtubule organizing center. The protein resides in the centrosome. Its subcellular location is the centriole. The protein localises to the cilium basal body. Functionally, required for anchoring microtubules to the centrosomes. Required for ciliation. This Mus musculus (Mouse) protein is Centrosomal protein 43.